A 230-amino-acid polypeptide reads, in one-letter code: Claudin-2 (230 aa).

Residues 1 to 7 (MASLGLQ) are Cytoplasmic-facing. Residues 8–28 (LVGYILGLLGLLGTLVAMLLP) form a helical membrane-spanning segment. Topologically, residues 29 to 81 (SWRTSSYVGTSIVTAVGFSKGLWMECATHSTGITQCDIYSTLLGLPADIQAAQ) are extracellular. Cysteines 54 and 64 form a disulfide. A helical transmembrane segment spans residues 82–102 (AMMVTSSAISSLACIVSVVGM). Residues 103–116 (RCTVFCQDSRAKDR) lie on the Cytoplasmic side of the membrane. The helical transmembrane segment at 117 to 137 (LAVVGGVFFIIGGLLGFIPVA) threads the bilayer. Residues 138 to 162 (WNLHGILRDFYSPLVPDSMKFEIGE) lie on the Extracellular side of the membrane. The chain crosses the membrane as a helical span at residues 163–183 (ALYLGIISSLFSLVAGIILCF). The Cytoplasmic portion of the chain corresponds to 184–230 (SCPLQGNRSDYYDSYQAQPLATRGSPRPGQPPKAKSEFNSYSLTGYV). The segment at 205–230 (TRGSPRPGQPPKAKSEFNSYSLTGYV) is disordered. Lysine 218 participates in a covalent cross-link: Glycyl lysine isopeptide (Lys-Gly) (interchain with G-Cter in SUMO). Phosphoserine occurs at positions 219 and 223. The span at 220–230 (EFNSYSLTGYV) shows a compositional bias: polar residues. The interval 229–230 (YV) is interaction with TJP1, TJP2 and TJP3.

Belongs to the claudin family. In terms of assembly, can form homo- and heteropolymers with other claudins to mediate paracellular barrier and channel functions of tight junctions in response to physiological stimuli. Homopolymers interact with CLDN3, but not CLDN1, homopolymers. Directly interacts with TJP1/ZO-1, TJP2/ZO-2 and TJP3/ZO-3. In terms of processing, the disulfide bond is necessary for pore formation, but is not required for correct protein trafficking.

It localises to the cell junction. The protein resides in the tight junction. Its subcellular location is the cell membrane. It carries out the reaction Na(+)(in) = Na(+)(out). The catalysed reaction is K(+)(in) = K(+)(out). It catalyses the reaction Rb(+)(in) = Rb(+)(out). The enzyme catalyses Li(+)(in) = Li(+)(out). It carries out the reaction Cs(+)(in) = Cs(+)(out). The catalysed reaction is Ca(2+)(in) = Ca(2+)(out). It catalyses the reaction methylamine(out) = methylamine(in). The enzyme catalyses choline(out) = choline(in). It carries out the reaction H2O(in) = H2O(out). Functionally, forms paracellular channels: polymerizes in tight junction strands with cation- and water-selective channels through the strands, conveying epithelial permeability in a process known as paracellular tight junction permeability. In intestinal epithelium, allows for sodium and water fluxes from the peritoneal side to the lumen of the intestine to regulate nutrient absorption and clear enteric pathogens as part of mucosal immune response. In kidney, allows passive sodium and calcium reabsorption across proximal tubules from the lumen back to the bloodstream. In the hepatobiliary tract, allows paracellular water and cation fluxes in the hepatic perivenous areas and biliary epithelium to generate bile flow and maintain osmotic gradients. This Canis lupus familiaris (Dog) protein is Claudin-2 (CLDN2).